The following is a 346-amino-acid chain: Putative [LysW]-L-2-aminoadipate/[LysW]-L-glutamate phosphate reductase (346 aa).

12 to 15 (SGFT) contacts NADP(+). Cys147 is an active-site residue. The segment at 178–198 (GSSEGGAGGGDASSHPERSGV) is disordered. Asn310 contacts NADP(+).

It belongs to the NAGSA dehydrogenase family. Type 1 subfamily. LysY sub-subfamily.

It localises to the cytoplasm. It catalyses the reaction [amino-group carrier protein]-C-terminal-N-(1-carboxy-5-oxopentan-1-yl)-L-glutamine + phosphate + NADP(+) = [amino-group carrier protein]-C-terminal-N-(1-carboxy-5-phosphooxy-5-oxopentan-1-yl)-L-glutamine + NADPH + H(+). The enzyme catalyses [amino-group carrier protein]-C-terminal-gamma-(L-glutamyl-5-semialdehyde)-L-glutamate + phosphate + NADP(+) = [amino-group carrier protein]-C-terminal-gamma-(5-phospho-L-glutamyl)-L-glutamate + NADPH + H(+). The protein operates within amino-acid biosynthesis; L-lysine biosynthesis via AAA pathway; L-lysine from L-alpha-aminoadipate (Thermus route): step 3/5. It participates in amino-acid biosynthesis; L-arginine biosynthesis. Its function is as follows. Involved in both the arginine and lysine biosynthetic pathways. The chain is Putative [LysW]-L-2-aminoadipate/[LysW]-L-glutamate phosphate reductase from Haloquadratum walsbyi (strain DSM 16790 / HBSQ001).